Here is a 132-residue protein sequence, read N- to C-terminus: MFDGIGFMELLLIGILGLVVLGPERLPVAVRSITGWIRAMKRMANSVKDELEQELKIEELHADLKKAESQGLKNLSPELQESIDQLKSAAQSVNRPYKVEDISPASSSAPVDPAPTETKTAETSANSEKPNG.

A helical transmembrane segment spans residues 2–22 (FDGIGFMELLLIGILGLVVLG). The disordered stretch occupies residues 86-132 (LKSAAQSVNRPYKVEDISPASSSAPVDPAPTETKTAETSANSEKPNG). The segment covering 103-115 (SPASSSAPVDPAP) has biased composition (low complexity). Residues 117–132 (ETKTAETSANSEKPNG) show a composition bias toward polar residues.

Belongs to the TatB family. In terms of assembly, the Tat system comprises two distinct complexes: a TatABC complex, containing multiple copies of TatA, TatB and TatC subunits, and a separate TatA complex, containing only TatA subunits. Substrates initially bind to the TatABC complex, which probably triggers association of the separate TatA complex to form the active translocon.

It is found in the cell inner membrane. Part of the twin-arginine translocation (Tat) system that transports large folded proteins containing a characteristic twin-arginine motif in their signal peptide across membranes. Together with TatC, TatB is part of a receptor directly interacting with Tat signal peptides. TatB may form an oligomeric binding site that transiently accommodates folded Tat precursor proteins before their translocation. The chain is Sec-independent protein translocase protein TatB from Shewanella sediminis (strain HAW-EB3).